Consider the following 163-residue polypeptide: MMIQSVHAKRLEFDNVILDLSHLQLHGPPEERYIVFLNVKRAFYKNFCVECDMSLETFALHLYETARLTVDGAVVPRAPEFAHHISFNSADRDQSLVLDLGPDARIVVAKQLRADERYHQRASGFLDFQRRHERPPAPIEHDLVARNALDRELEIKLYTLCES.

This is an uncharacterized protein from Orgyia pseudotsugata (Douglas-fir tussock moth).